Reading from the N-terminus, the 238-residue chain is Lipid transferase CIDEC (238 aa).

Residues 1-35 form a required for liquid-liquid phase separation (LLPS) region; that stretch reads MEYAMKSLSLLYPKSLSRHVSVRTSVVTQQLLSEP. Residues 41-118 enclose the CIDE-N domain; sequence RARPCRVSTA…VLQKGQKWQP (78 aa).

It belongs to the CIDE family. In terms of assembly, homodimer. Homooligomer; undergoes liquid-liquid phase separation (LLPS) via its N-terminus, facilitating lipid droplet fusion, occurs at the lipid droplet contact sites. Interacts with CIDEA. Interacts with PLIN1. Interacts with NFAT5; this interaction is direct and retains NFAT5 in the cytoplasm. Interacts with CEBPB. Interacts with isoform CLSTN3beta of CLSTN3; inhibiting the lipid transferase activity of CIDEC. Ubiquitinated and targeted to proteasomal degradation, resulting in a short half-life (about 15 minutes in 3T3-L1 cells). Protein stability depends on triaclyglycerol synthesis, fatty acid availability and lipid droplet formation. In terms of tissue distribution, expressed mainly in adipose tissue, small intestine, heart, colon and stomach and, at lower levels, in brain, kidney and liver.

Its subcellular location is the lipid droplet. The protein localises to the endoplasmic reticulum. The protein resides in the nucleus. It catalyses the reaction a triacyl-sn-glycerol(in) = a triacyl-sn-glycerol(out). Lipid transferase specifically expressed in white adipose tissue, which promotes unilocular lipid droplet formation by mediating lipid droplet fusion. Lipid droplet fusion promotes their enlargement, restricting lipolysis and favoring lipid storage. Localizes on the lipid droplet surface, at focal contact sites between lipid droplets, and mediates atypical lipid droplet fusion by undergoing liquid-liquid phase separation (LLPS) and promoting directional net neutral lipid transfer from the smaller to larger lipid droplets. The transfer direction may be driven by the internal pressure difference between the contacting lipid droplet pair. Its role in neutral lipid transfer and lipid droplet enlargement is activated by the interaction with PLIN1. May also act as a CEBPB coactivator in the white adipose tissue to control the expression of a subset of CEBPB downstream target genes, including SOCS1, SOCS3, TGFB1, TGFBR1, ID2 and XDH. When overexpressed in preadipocytes, induces apoptosis or increases cell susceptibility to apoptosis induced by serum deprivation or TGFB treatment. In Homo sapiens (Human), this protein is Lipid transferase CIDEC.